The following is a 329-amino-acid chain: Beta-ketoacyl-[acyl-carrier-protein] synthase III (329 aa).

Catalysis depends on residues Cys114 and His255. Residues 256 to 260 (QANQR) form an ACP-binding region. Asn285 is an active-site residue.

The protein belongs to the thiolase-like superfamily. FabH family. As to quaternary structure, homodimer.

It is found in the cytoplasm. The catalysed reaction is malonyl-[ACP] + acetyl-CoA + H(+) = 3-oxobutanoyl-[ACP] + CO2 + CoA. Its pathway is lipid metabolism; fatty acid biosynthesis. Catalyzes the condensation reaction of fatty acid synthesis by the addition to an acyl acceptor of two carbons from malonyl-ACP. Catalyzes the first condensation reaction which initiates fatty acid synthesis and may therefore play a role in governing the total rate of fatty acid production. Possesses both acetoacetyl-ACP synthase and acetyl transacylase activities. Its substrate specificity determines the biosynthesis of branched-chain and/or straight-chain of fatty acids. This chain is Beta-ketoacyl-[acyl-carrier-protein] synthase III, found in Trichodesmium erythraeum (strain IMS101).